The primary structure comprises 409 residues: NADH-quinone oxidoreductase subunit D (409 aa).

This sequence belongs to the complex I 49 kDa subunit family. NDH-1 is composed of 14 different subunits. Subunits NuoB, C, D, E, F, and G constitute the peripheral sector of the complex.

It is found in the cell inner membrane. It catalyses the reaction a quinone + NADH + 5 H(+)(in) = a quinol + NAD(+) + 4 H(+)(out). NDH-1 shuttles electrons from NADH, via FMN and iron-sulfur (Fe-S) centers, to quinones in the respiratory chain. The immediate electron acceptor for the enzyme in this species is believed to be ubiquinone. Couples the redox reaction to proton translocation (for every two electrons transferred, four hydrogen ions are translocated across the cytoplasmic membrane), and thus conserves the redox energy in a proton gradient. The sequence is that of NADH-quinone oxidoreductase subunit D from Helicobacter acinonychis (strain Sheeba).